Consider the following 619-residue polypeptide: Probable serine/threonine-protein kinase WNK8 (619 aa).

Residues 1–14 show a composition bias toward basic and acidic residues; it reads MSGARRCGDRRSER. The interval 1–30 is disordered; it reads MSGARRCGDRRSERSSVVGDNRNGYVETDP. The region spanning 35–291 is the Protein kinase domain; sequence GRLSEVLGKG…AEELLLDPFL (257 aa). Residues 115–118 and Lys-163 each bind ATP; that span reads TELF. Residue Asp-180 is the Proton acceptor of the active site. Disordered regions lie at residues 293-335, 419-464, 508-555, and 585-619; these read PPQN…AKTT, YADD…PGPH, CSAS…SMVD, and GFRD…HYMF. Residues 419–428 are compositionally biased toward acidic residues; sequence YADDDDDDDV. A compositionally biased stretch (low complexity) spans 439 to 448; the sequence is SSSPTSSQGS. Residues 602–619 are compositionally biased toward basic residues; sequence QHRRRSSSKVDHKHHYMF.

The protein belongs to the protein kinase superfamily. Ser/Thr protein kinase family. WNK subfamily.

It catalyses the reaction L-seryl-[protein] + ATP = O-phospho-L-seryl-[protein] + ADP + H(+). The catalysed reaction is L-threonyl-[protein] + ATP = O-phospho-L-threonyl-[protein] + ADP + H(+). The chain is Probable serine/threonine-protein kinase WNK8 (WNK8) from Oryza sativa subsp. japonica (Rice).